Reading from the N-terminus, the 326-residue chain is DnaJ homolog subfamily B member 6 (326 aa).

One can recognise a J domain in the interval 2-69; that stretch reads VDYYEVLGVQ…KKRDIYDKYG (68 aa). An interaction with HSP70 region spans residues 2–146; the sequence is VDYYEVLGVQ…TGSFFSAFSG (145 aa). The segment at 119 to 242 is interaction with KRT18; that stretch reads FEDFFGNRRG…ADDDALAEER (124 aa). Arginine 135 bears the Omega-N-methylarginine mark. Residues 249–326 are disordered; it reads ALPAQPAGLR…KKKKSTKGNH (78 aa). Serine 277 is subject to Phosphoserine.

In terms of assembly, homooligomer. Interacts with BAG3, HSPB8 and STUB1. Interacts with ALKBH1. Interacts with HSP70, KRT18 and PTTG. As to quaternary structure, interacts with histone deacetylases HDAC4, HDAC6, and SIRT2, HDAC activity is required for antiaggregation. As to expression, widely expressed. Highest levels in testis and brain, and lower levels in heart, spleen, intestine, ovary, placenta, lung, kidney, pancreas, thymus, prostate, skeletal muscle, liver and leukocytes. In testis, expressed in germ cells in the earlier stages of differentiation pathway as well as in spermatids. In brain, expressed at a higher level in hippocampus and thalamus and a lower level in amygdala, substantia nigra, corpus callosum and caudate nucleus.

It localises to the cytoplasm. The protein localises to the perinuclear region. Its subcellular location is the nucleus. The protein resides in the myofibril. It is found in the sarcomere. It localises to the z line. Has a stimulatory effect on the ATPase activity of HSP70 in a dose-dependent and time-dependent manner and hence acts as a co-chaperone of HSP70. Plays an indispensable role in the organization of KRT8/KRT18 filaments. Acts as an endogenous molecular chaperone for neuronal proteins including huntingtin. Suppresses aggregation and toxicity of polyglutamine-containing, aggregation-prone proteins. Also reduces cellular toxicity and caspase-3 activity. Functionally, isoform B but not isoform A inhibits huntingtin aggregation. This chain is DnaJ homolog subfamily B member 6 (DNAJB6), found in Homo sapiens (Human).